The following is a 552-amino-acid chain: Terpene synthase 5 (552 aa).

The Mg(2+) site is built by D307, D311, and E457. The short motif at 307 to 311 (DDTYD) is the DDXXD motif element.

This sequence belongs to the terpene synthase family. The cofactor is Mg(2+).

Functionally, catalyzes the cyclization of farnesyl diphosphate to multiple sesquiterpenes, such as olefins and sesquiterpene alcohols. The chain is Terpene synthase 5 (TPS5) from Ricinus communis (Castor bean).